A 420-amino-acid chain; its full sequence is D-tagatose-1,6-bisphosphate aldolase subunit GatZ (420 aa).

This sequence belongs to the GatZ/KbaZ family. GatZ subfamily. In terms of assembly, forms a complex with GatY.

It participates in carbohydrate metabolism; D-tagatose 6-phosphate degradation; D-glyceraldehyde 3-phosphate and glycerone phosphate from D-tagatose 6-phosphate: step 2/2. In terms of biological role, component of the tagatose-1,6-bisphosphate aldolase GatYZ that is required for full activity and stability of the Y subunit. Could have a chaperone-like function for the proper and stable folding of GatY. When expressed alone, GatZ does not show any aldolase activity. Is involved in the catabolism of galactitol. This is D-tagatose-1,6-bisphosphate aldolase subunit GatZ from Escherichia coli O6:K15:H31 (strain 536 / UPEC).